We begin with the raw amino-acid sequence, 226 residues long: Cytidylate kinase (226 aa).

ATP is bound at residue 10 to 18 (GPAGAGKST).

Belongs to the cytidylate kinase family. Type 1 subfamily.

The protein resides in the cytoplasm. The enzyme catalyses CMP + ATP = CDP + ADP. It catalyses the reaction dCMP + ATP = dCDP + ADP. The polypeptide is Cytidylate kinase (Caldicellulosiruptor bescii (strain ATCC BAA-1888 / DSM 6725 / KCTC 15123 / Z-1320) (Anaerocellum thermophilum)).